The chain runs to 162 residues: HTH-type transcriptional regulator IscR (162 aa).

Residues 2–131 form the HTH rrf2-type domain; that stretch reads RLTSKGRYAV…NNITLGELVN (130 aa). The segment at residues 28–51 is a DNA-binding region (H-T-H motif); the sequence is LADISERQGISLSYLEQLFSRLRK. [2Fe-2S] cluster contacts are provided by Cys92, Cys98, and Cys104. The segment at 140–162 is disordered; sequence GRQHTHDAPRTRTQDAIDVKLRA. Residues 143–162 are compositionally biased toward basic and acidic residues; sequence HTHDAPRTRTQDAIDVKLRA.

Requires [2Fe-2S] cluster as cofactor.

Functionally, regulates the transcription of several operons and genes involved in the biogenesis of Fe-S clusters and Fe-S-containing proteins. The polypeptide is HTH-type transcriptional regulator IscR (Shigella flexneri).